A 325-amino-acid chain; its full sequence is Acetyl-coenzyme A carboxylase carboxyl transferase subunit alpha (325 aa).

In terms of domain architecture, CoA carboxyltransferase C-terminal spans 35–292 (EIEKLEARLA…DRVLRRSLKQ (258 aa)).

It belongs to the AccA family. In terms of assembly, acetyl-CoA carboxylase is a heterohexamer composed of biotin carboxyl carrier protein (AccB), biotin carboxylase (AccC) and two subunits each of ACCase subunit alpha (AccA) and ACCase subunit beta (AccD).

Its subcellular location is the cytoplasm. The catalysed reaction is N(6)-carboxybiotinyl-L-lysyl-[protein] + acetyl-CoA = N(6)-biotinyl-L-lysyl-[protein] + malonyl-CoA. It participates in lipid metabolism; malonyl-CoA biosynthesis; malonyl-CoA from acetyl-CoA: step 1/1. In terms of biological role, component of the acetyl coenzyme A carboxylase (ACC) complex. First, biotin carboxylase catalyzes the carboxylation of biotin on its carrier protein (BCCP) and then the CO(2) group is transferred by the carboxyltransferase to acetyl-CoA to form malonyl-CoA. This chain is Acetyl-coenzyme A carboxylase carboxyl transferase subunit alpha, found in Geobacillus kaustophilus (strain HTA426).